A 209-amino-acid chain; its full sequence is Probable E3 ubiquitin-protein ligase NleG7 (209 aa).

It belongs to the NleG E3 ligase family. In terms of processing, two sizes of protein are detected in situ; only the smaller protein is secreted.

The protein localises to the secreted. It is found in the host cytoplasm. The catalysed reaction is S-ubiquitinyl-[E2 ubiquitin-conjugating enzyme]-L-cysteine + [acceptor protein]-L-lysine = [E2 ubiquitin-conjugating enzyme]-L-cysteine + N(6)-ubiquitinyl-[acceptor protein]-L-lysine.. Functionally, effector proteins function to alter host cell physiology and promote bacterial survival in host tissues. This protein is probably an E3 ubiquitin-protein ligase that interferes with the host's ubiquitination pathway and targets host proteins for proteasomal degradation. Mice infected with a strain of bacteria deleted for this gene were colonized less quickly by bacteria. The sequence is that of Probable E3 ubiquitin-protein ligase NleG7 from Citrobacter rodentium.